We begin with the raw amino-acid sequence, 334 residues long: F-box protein AUF1 (334 aa).

The 49-residue stretch at 1 to 49 (MDAFDAIPDPVVIDILNRVGDVKTLIRCRSVSKRFNSLATQSESLLLQL) folds into the F-box domain.

As to quaternary structure, part of a SCF (ASK-cullin-F-box) protein ligase complex. Interacts with SKP1A/ASK1, SKP1B/ASK2, ASK11 and ASK13.

It is found in the nucleus. Its pathway is protein modification; protein ubiquitination. In terms of biological role, component of SCF(ASK-cullin-F-box) E3 ubiquitin ligase complexes, which may mediate the ubiquitination and subsequent proteasomal degradation of target proteins. Involved in the control of basipetal and acropetal auxin transport by promoting the distribution and expression of the auxin transporter PIN2. Promotes cytokinin-mediated cell expansion in the root elongation and differentiation zone, without affecting root cell division. In Arabidopsis thaliana (Mouse-ear cress), this protein is F-box protein AUF1.